Consider the following 174-residue polypeptide: 5-hydroxymethyl-dUMP N-hydrolase (174 aa).

A2 carries the N-acetylalanine modification. G27 contributes to the 5-hydroxymethyl-dUMP binding site. S28 carries the phosphoserine modification. 5-hydroxymethyl-dUMP contacts are provided by I29, R30, G31, S98, G100, and E104. S98 is modified (phosphoserine). Residues S123, S128, S138, and S169 each carry the phosphoserine modification. S128 lines the 5-hydroxymethyl-dUMP pocket.

It belongs to the 2'-deoxynucleoside 5'-phosphate N-hydrolase 1 family. Monomer and homodimer. As to expression, expressed at low levels in brain, colon, lung, peripheral blood leukocytes, placenta, small intestine, and thymus. Expressed at high levels in heart, kidney, liver, skeletal muscle and spleen. Overexpressed in a significant proportion of breast cancers.

The protein resides in the cytoplasm. The protein localises to the nucleus. The enzyme catalyses 5-hydroxymethyl-dUMP + H2O = 5-hydroxymethyluracil + 2-deoxy-D-ribose 5-phosphate. Inhibited by AMP and GMP. Part of a nucleotide salvage pathway that eliminates epigenetically modified 5-hydroxymethyl-dCMP (hmdCMP) in a two-step process entailing deamination to cytotoxic 5-hydroxymethyl-dUMP (hmdUMP), followed by its hydrolysis into 5-hydroxymethyluracil (hmU) and 2-deoxy-D-ribose 5-phosphate (deoxyribosephosphate). Catalyzes the second step in that pathway, the hydrolysis of the N-glycosidic bond in hmdUMP, degrading this cytotoxic nucleotide to avoid its genomic integration. The protein is 5-hydroxymethyl-dUMP N-hydrolase of Homo sapiens (Human).